The sequence spans 519 residues: Ribonuclease Y 1 (519 aa).

Residues 2 to 22 traverse the membrane as a helical segment; that stretch reads IILYIILAIIAIVVGYCAGFF. A disordered region spans residues 84–113; it reads QKQEDRLLQREDSLDRKDNSFEKRENSLER. The region spanning 209-294 is the KH domain; it reads TITVVSLPND…EMVEKAKKEM (86 aa). In terms of domain architecture, HD spans 335–428; that stretch reads VLNHSIEVAN…VAAANSISAA (94 aa).

Belongs to the RNase Y family.

It localises to the cell membrane. In terms of biological role, endoribonuclease that initiates mRNA decay. This Pediococcus pentosaceus (strain ATCC 25745 / CCUG 21536 / LMG 10740 / 183-1w) protein is Ribonuclease Y 1.